Reading from the N-terminus, the 292-residue chain is Ribosomal protein L11 methyltransferase (292 aa).

4 residues coordinate S-adenosyl-L-methionine: T144, G165, D187, and N229.

Belongs to the methyltransferase superfamily. PrmA family.

The protein localises to the cytoplasm. The catalysed reaction is L-lysyl-[protein] + 3 S-adenosyl-L-methionine = N(6),N(6),N(6)-trimethyl-L-lysyl-[protein] + 3 S-adenosyl-L-homocysteine + 3 H(+). Functionally, methylates ribosomal protein L11. The chain is Ribosomal protein L11 methyltransferase from Pseudomonas savastanoi pv. phaseolicola (strain 1448A / Race 6) (Pseudomonas syringae pv. phaseolicola (strain 1448A / Race 6)).